The following is a 146-amino-acid chain: 3-dehydroquinate dehydratase (146 aa).

The Proton acceptor role is filled by tyrosine 22. The substrate site is built by asparagine 73, histidine 79, and aspartate 86. The active-site Proton donor is histidine 99. Residues 100–101 (VS) and arginine 110 contribute to the substrate site.

Belongs to the type-II 3-dehydroquinase family. In terms of assembly, homododecamer.

The enzyme catalyses 3-dehydroquinate = 3-dehydroshikimate + H2O. It participates in metabolic intermediate biosynthesis; chorismate biosynthesis; chorismate from D-erythrose 4-phosphate and phosphoenolpyruvate: step 3/7. In terms of biological role, catalyzes a trans-dehydration via an enolate intermediate. In Kineococcus radiotolerans (strain ATCC BAA-149 / DSM 14245 / SRS30216), this protein is 3-dehydroquinate dehydratase.